The primary structure comprises 132 residues: uncharacterized protein (132 aa).

It to M.jannaschii MJ0661.

This is an uncharacterized protein from Helicobacter pylori (strain J99 / ATCC 700824) (Campylobacter pylori J99).